The sequence spans 423 residues: MNKILPEMKSTQNLISSSPPPPLIPLKSNTSLSNLNSKITPNILLIIIILSIIFFISGLLHILVKFLLTPSRESREDYFDNVTALQGQLQQLFNLHDSGVDQSLIDTLPVFHYKSIVGLKISPFDCPVCLCEFETEDKLRLLPKCSHAFHVECIDTWLLSHSTCPLCRSNLLSGFSSHHNLSSSYLLVLESEQSSRDMVPVLESNSQLGYDVNNDSESTRIRSGRKSCDPDGDMDGLDEKVVPLEVKLGKFRNIDHVGEGSDQKKNSISGNSKNVDGRRCLSMGSYEYIMDQEATLKVHVSTKKLSGKDRVPSHRTVMSECGFDPTVKGIEKSVVERESFSLSKIWLRGKKEKQKGTSARDSDCSFVSSSSLRFPNHRIPPEESLKSENSESLETKTPSFARRTMHWLAGRQNKIVQPSTSNV.

A helical membrane pass occupies residues 43–63; sequence ILLIIIILSIIFFISGLLHIL. The RING-type; atypical zinc finger occupies 126 to 168; that stretch reads CPVCLCEFETEDKLRLLPKCSHAFHVECIDTWLLSHSTCPLCR. 2 disordered regions span residues 213-236 and 377-399; these read NNDS…DMDG and HRIP…KTPS. The span at 379–389 shows a compositional bias: basic and acidic residues; the sequence is IPPEESLKSEN.

It belongs to the RING-type zinc finger family. ATL subfamily.

The protein resides in the membrane. The catalysed reaction is S-ubiquitinyl-[E2 ubiquitin-conjugating enzyme]-L-cysteine + [acceptor protein]-L-lysine = [E2 ubiquitin-conjugating enzyme]-L-cysteine + N(6)-ubiquitinyl-[acceptor protein]-L-lysine.. It functions in the pathway protein modification; protein ubiquitination. May be involved in female gametophyte development. This chain is Putative RING-H2 finger protein ATL49 (ATL49), found in Arabidopsis thaliana (Mouse-ear cress).